A 241-amino-acid polypeptide reads, in one-letter code: HTH-type quorum-sensing regulator RhlR (241 aa).

One can recognise an HTH luxR-type domain in the interval 174–239; sequence LMSNPVCLSH…LAAAYAAALG (66 aa). The H-T-H motif DNA-binding region spans 198–217; it reads SGEIAIILSISESTVNFHHK.

The protein belongs to the autoinducer-regulated transcriptional regulatory protein family. In terms of assembly, homodimer in the absence of any acyl-L-homoserine lactone. The presence of the autoinducer C4-HSL has no significant effect on dimerization whereas N-(3-oxododecanoyl)-L-homoserine lactone (3O-C12-HSL), the LasR inducer, is able to dissociate the RhlR homodimers into monomers.

Its subcellular location is the cytoplasm. With respect to regulation, activated by interaction with the autoinducer signal molecule N-butanoyl-L-homoserine lactone (C4-HSL or BHL), the product of the RhlI synthase. Is also activated by binding to rosmarinic acid (RA), a homoserine lactone mimic produced by plants, which induces a broad quorum sensing response, including the induction of all major quorum sensing controlled virulence factors. Rosmarinic acid secretion may be a plant defense mechanism to stimulate a premature quorum sensing response. Quorum-sensing regulator that controls the expression of multiple virulence factors in response to extracellular signaling molecules called autoinducers. Involved, among others, in the transcriptional regulation of genes that are responsible for rhamnolipid surfactant biosynthesis. Acts by binding to a specific sequence in the rhlAB regulatory region, both in the presence and in the absence of its autoinducer. In the former case it activates transcription of the promoter, whereas in the latter it acts as a transcriptional repressor. Also regulates the expression of the rmlBDAC operon, encoding dTDP-L-rhamnose biosynthetic enzymes, by binding to the rml box in the promoter region. In addition, is involved in the regulation of the production of elastase (lasB) and pyocyanine. The polypeptide is HTH-type quorum-sensing regulator RhlR (Pseudomonas aeruginosa (strain ATCC 15692 / DSM 22644 / CIP 104116 / JCM 14847 / LMG 12228 / 1C / PRS 101 / PAO1)).